Consider the following 370-residue polypeptide: Protein PELPK1 (370 aa).

Residues 1–34 (MALMKKSLSAALLSSPLLIICLIALLADPFSVGA) form the signal peptide. Tandem repeats lie at residues 43-47 (PEIPK), 49-53 (PELPK), 54-58 (FEVPK), 60-64 (PEFPK), 65-69 (PELPK), 71-75 (PEFPK), 76-80 (PELPK), 82-86 (PEIPK), 87-91 (PELPK), 93-97 (PEIPK), 98-102 (PEETK), 104-108 (PDIPK), 109-113 (LELPK), 115-119 (PEIPK), 120-124 (PELPK), 126-130 (PEIPK), 131-135 (PELPK), 137-141 (PEIQK), 142-146 (PELPK), 148-152 (PEIPK), 153-157 (PELPK), 159-163 (PEIPK), 164-168 (PDLPK), 175-179 (PEVPK), 186-190 (PEAPK), 192-196 (PEIPK), 197-201 (PELPK), 203-207 (PEVPK), 214-218 (PEIQK), 219-223 (PELPK), 225-229 (PELPK), 231-235 (PEIQK), 236-240 (PELPK), 242-246 (PEVPK), 247-251 (LEAPK), 253-257 (PEIQK), 258-262 (PELPK), 264-268 (PELPK), 270-274 (PEIQK), 275-279 (PELPK), 281-285 (PEIQK), 286-290 (PELPK), 292-296 (PEVPK), 303-307 (PEVPK), 314-318 (PEIPK), 319-323 (PELPK), 325-329 (PEVPK), 330-334 (PELPK), 336-340 (PEITK), 344-348 (PEIPK), 355-359 (PQLPK), and 361-365 (PEFPK). Residues 43-365 (PEIPKLPELP…QLPKLPEFPK (323 aa)) are 52 X 5 AA tandem repeat of P-[DEGQ]-[AEFLIV]-[QPT]-K. The span at 65–223 (PELPKLPEFP…PEIQKPELPK (159 aa)) shows a compositional bias: basic and acidic residues. Residues 65–370 (PELPKLPEFP…PEFPKVPGTP (306 aa)) form a disordered region. The span at 232-262 (EIQKPELPKLPEVPKLEAPKVPEIQKPELPK) shows a compositional bias: basic and acidic residues. Basic and acidic residues-rich tracts occupy residues 271-296 (EIQK…EVPK) and 306-334 (PKSE…ELPK).

Its subcellular location is the secreted. The protein resides in the cell wall. Its function is as follows. Positive regulator of germination and plant growth. This Arabidopsis thaliana (Mouse-ear cress) protein is Protein PELPK1.